The following is a 345-amino-acid chain: Class I histocompatibility antigen, F10 alpha chain (345 aa).

The signal sequence occupies residues 1–22; it reads MGPCGALGLGLLLAAVCGAAAP. The segment at 23-110 is alpha-1; the sequence is ELHTLRYIQT…ILQRRYNQTG (88 aa). Over 23 to 301 the chain is Extracellular; the sequence is ELHTLRYIQT…WEPPQPNLVP (279 aa). 2 N-linked (GlcNAc...) asparagine glycosylation sites follow: asparagine 59 and asparagine 107. An alpha-2 region spans residues 111 to 201; sequence GSHTVQWMYG…EYGKAELGRR (91 aa). Disulfide bonds link cysteine 121–cysteine 183 and cysteine 221–cysteine 277. The segment at 202–292 is alpha-3; that stretch reads ERPEVRVWGK…SLPQPGLYSW (91 aa). The 90-residue stretch at 204–293 folds into the Ig-like C1-type domain; sequence PEVRVWGKEA…LPQPGLYSWE (90 aa). Residues 293 to 301 are connecting peptide; that stretch reads EPPQPNLVP. Residues 302–324 traverse the membrane as a helical segment; that stretch reads IVAGVAVAIVAIAIMVGVGFIIY. Over 325 to 345 the chain is Cytoplasmic; that stretch reads RRHAGKKGKGYNIAPGSNPAI.

Belongs to the MHC class I family. In terms of assembly, heterodimer of an alpha chain and a beta chain (beta-2-microglobulin).

The protein localises to the membrane. Functionally, involved in the presentation of foreign antigens to the immune system. This chain is Class I histocompatibility antigen, F10 alpha chain, found in Gallus gallus (Chicken).